Here is a 94-residue protein sequence, read N- to C-terminus: Protein LURE 1.1 (94 aa).

Positions 1-19 are cleaved as a signal peptide; sequence MKLIFIFLTLLIFVSSCTS. 3 disulfides stabilise this stretch: Cys58-Cys75, Cys61-Cys82, and Cys65-Cys84. The PRK6 binding stretch occupies residues 67-87; sequence RRDRYIRTCSFERKLCRCSYS.

This sequence belongs to the DEFL family. Binds to PRK6 LRRs. As to expression, expressed in the pistil. Detected exclusively in the synergid cells.

It is found in the secreted. In terms of biological role, pollen tube attractants guiding pollen tubes to the ovular micropyle. The sequence is that of Protein LURE 1.1 from Arabidopsis thaliana (Mouse-ear cress).